The following is a 553-amino-acid chain: Urocanate hydratase (553 aa).

NAD(+)-binding positions include 45–46 (GG), Q123, 169–171 (GMG), D189, R194, 235–236 (NA), 256–260 (QTSAH), 266–267 (YV), Y315, and G485.

It belongs to the urocanase family. The cofactor is NAD(+).

It is found in the cytoplasm. The enzyme catalyses 4-imidazolone-5-propanoate = trans-urocanate + H2O. Its pathway is amino-acid degradation; L-histidine degradation into L-glutamate; N-formimidoyl-L-glutamate from L-histidine: step 2/3. Catalyzes the conversion of urocanate to 4-imidazolone-5-propionate. This Staphylococcus aureus (strain COL) protein is Urocanate hydratase.